A 275-amino-acid polypeptide reads, in one-letter code: Fructose-2,6-bisphosphatase TIGAR (275 aa).

His-11 acts as the Tele-phosphohistidine intermediate in catalysis. Catalysis depends on Glu-89, which acts as the Proton donor/acceptor.

It belongs to the phosphoglycerate mutase family.

The protein resides in the cytoplasm. It is found in the nucleus. Its subcellular location is the mitochondrion. The enzyme catalyses beta-D-fructose 2,6-bisphosphate + H2O = beta-D-fructose 6-phosphate + phosphate. Fructose-bisphosphatase hydrolyzing fructose-2,6-bisphosphate as well as fructose-1,6-bisphosphate. Acts as a negative regulator of glycolysis by lowering intracellular levels of fructose-2,6-bisphosphate in a p53/TP53-dependent manner, resulting in the pentose phosphate pathway (PPP) activation and NADPH production. Contributes to the generation of reduced glutathione to cause a decrease in intracellular reactive oxygen species (ROS) content, correlating with its ability to protect cells from oxidative or metabolic stress-induced cell death. May play a role in mitophagy inhibition. The polypeptide is Fructose-2,6-bisphosphatase TIGAR (Xenopus tropicalis (Western clawed frog)).